The primary structure comprises 476 residues: Exodeoxyribonuclease 7 large subunit (476 aa).

It belongs to the XseA family. Heterooligomer composed of large and small subunits.

It localises to the cytoplasm. It catalyses the reaction Exonucleolytic cleavage in either 5'- to 3'- or 3'- to 5'-direction to yield nucleoside 5'-phosphates.. Its function is as follows. Bidirectionally degrades single-stranded DNA into large acid-insoluble oligonucleotides, which are then degraded further into small acid-soluble oligonucleotides. The sequence is that of Exodeoxyribonuclease 7 large subunit from Bartonella bacilliformis (strain ATCC 35685 / KC583 / Herrer 020/F12,63).